The chain runs to 155 residues: Small ribosomal subunit protein uS7c (155 aa).

The protein belongs to the universal ribosomal protein uS7 family. In terms of assembly, part of the 30S ribosomal subunit.

The protein resides in the plastid. The protein localises to the chloroplast. One of the primary rRNA binding proteins, it binds directly to 16S rRNA where it nucleates assembly of the head domain of the 30S subunit. The chain is Small ribosomal subunit protein uS7c (rps7) from Cabomba caroliniana (Carolina fanwort).